The chain runs to 290 residues: MVDKKLKVVIITGMSGAGKTVAVHSLEDLGYFVIDNMLPGLAERFVDVIEDSREFDKIAMVMDMRSRGFYDEVLPNFEKLKKRADLDVKLLFLDANDVTLISRYKETRRSHPLSPQGRILDGVELERKLSTDLKSQADIVIDTTNVTPRNLKLRLNKLFGHGEGNDFYVEVMSFGFKYGLPLDADIVMDVRFLPNPFYIPELKHLTGNDPAVQNYVMQSPLAKEFYQHLRSLLEIALPGYIKEGKSSLTIAIGCTGGQHRSVTIANKLSADLKEKGYKVNTYHRDIEKAK.

G13–T20 is a binding site for ATP. D63–S66 lines the GTP pocket.

This sequence belongs to the RapZ-like family.

Functionally, displays ATPase and GTPase activities. This Limosilactobacillus reuteri subsp. reuteri (strain JCM 1112) (Lactobacillus reuteri) protein is Nucleotide-binding protein LAR_0375.